The following is a 269-amino-acid chain: Undecaprenyl-diphosphatase (269 aa).

A run of 8 helical transmembrane segments spans residues 3–23, 41–61, 78–98, 107–127, 148–167, 184–204, 213–233, and 248–268; these read LLIKAFIMGIVEGLTEFLPIS, FATMFEIVIQLGAILAVVFYY, GFNLWFKIFIAFIPAAVIGLL, LFSPFTVAIALIAGAIMMIVI, SLLIGIAQVMSLFPGMSRSA, AEFSFFLAIPTMFAATTLSLL, LEWQALAVGFITSFLTALFVV, and FAYYRLAVGVLMILLVAEKIV.

The protein belongs to the UppP family.

The protein resides in the cell membrane. It carries out the reaction di-trans,octa-cis-undecaprenyl diphosphate + H2O = di-trans,octa-cis-undecaprenyl phosphate + phosphate + H(+). Catalyzes the dephosphorylation of undecaprenyl diphosphate (UPP). Confers resistance to bacitracin. The chain is Undecaprenyl-diphosphatase from Thermoanaerobacter sp. (strain X514).